A 1105-amino-acid chain; its full sequence is DNA polymerase delta catalytic subunit (1105 aa).

A disordered region spans residues 1–46 (MSSGGRGGKRRGAPPPGPSGAAAKRAHPGGTPQPPPPAATAAAPVA). Zn(2+) contacts are provided by Cys-1015, Cys-1018, Cys-1030, and Cys-1033. Residues 1015-1033 (CLGCKAVISGSNQTLCFHC) form a CysA-type zinc finger. Residues Cys-1062, Cys-1065, Cys-1075, and Cys-1080 each contribute to the [4Fe-4S] cluster site. Positions 1062-1080 (CQECQGSLHQDVLCTSRDC) match the CysB motif motif.

This sequence belongs to the DNA polymerase type-B family. Heterodimer with subunits of 125 kDa and 50 kDa. The 125 kDa subunit contains the polymerase active site and most likely the active site for the 3'-5' exonuclease activity. Requires [4Fe-4S] cluster as cofactor.

The protein localises to the nucleus. The enzyme catalyses DNA(n) + a 2'-deoxyribonucleoside 5'-triphosphate = DNA(n+1) + diphosphate. Its function is as follows. This polymerase possesses two enzymatic activities: DNA synthesis (polymerase) and an exonucleolytic activity that degrades single-stranded DNA in the 3'- to 5'-direction. This chain is DNA polymerase delta catalytic subunit (POLD1), found in Oryza sativa subsp. japonica (Rice).